The primary structure comprises 343 residues: uncharacterized protein (343 aa).

A disordered region spans residues 66–89; that stretch reads TQNPEPTSASTPPSASASSLPNGA. The span at 71 to 84 shows a compositional bias: low complexity; it reads PTSASTPPSASASS. The helical transmembrane segment at 96 to 116 threads the bilayer; the sequence is GVIAGPIVGVLGGLIVLVIIF. 2 disordered regions span residues 161–191 and 252–343; these read GGYQ…NDTR and GRPL…SEHF. The segment covering 165–188 has biased composition (polar residues); sequence MHSTPWASSPRNSTIPQRSQSFYN. Basic and acidic residues predominate over residues 280–289; it reads SNDDSDETKL. Low complexity predominate over residues 290–299; it reads KQSSTESSSE. Basic and acidic residues-rich tracts occupy residues 301–311 and 322–333; these read LDEKDKFDKNS and SSYEHEISEEHK. Basic residues predominate over residues 334–343; sequence KHSKKRSEHF.

It localises to the golgi apparatus membrane. This is an uncharacterized protein from Schizosaccharomyces pombe (strain 972 / ATCC 24843) (Fission yeast).